The following is a 288-amino-acid chain: Quinate/shikimate dehydrogenase (288 aa).

Substrate-binding residues include Lys-71 and Asp-107. NAD(+) contacts are provided by residues 132 to 135 (AGGA), 155 to 158 (NRKD), Lys-205, 232 to 235 (CVYN), and Gly-255.

It belongs to the shikimate dehydrogenase family. Homodimer.

The catalysed reaction is L-quinate + NAD(+) = 3-dehydroquinate + NADH + H(+). It catalyses the reaction L-quinate + NADP(+) = 3-dehydroquinate + NADPH + H(+). The enzyme catalyses shikimate + NADP(+) = 3-dehydroshikimate + NADPH + H(+). It carries out the reaction shikimate + NAD(+) = 3-dehydroshikimate + NADH + H(+). It functions in the pathway metabolic intermediate biosynthesis; chorismate biosynthesis; chorismate from D-erythrose 4-phosphate and phosphoenolpyruvate: step 4/7. Functionally, the actual biological function of YdiB remains unclear, nor is it known whether 3-dehydroshikimate or quinate represents the natural substrate. Catalyzes the reversible NAD-dependent reduction of both 3-dehydroshikimate (DHSA) and 3-dehydroquinate to yield shikimate (SA) and quinate, respectively. It can use both NAD or NADP for catalysis, however it has higher catalytic efficiency with NAD. The chain is Quinate/shikimate dehydrogenase from Salmonella agona (strain SL483).